A 3083-amino-acid polypeptide reads, in one-letter code: Genome polyprotein (3083 aa).

The Peptidase S30 domain maps to 173-313; sequence VVRSASVNNL…VFFYDDVDHY (141 aa). Residues histidine 226, glutamate 235, and serine 267 each act as for P1 proteinase activity in the active site. An Involved in interaction with stylet and aphid transmission motif is present at residues 365–368; that stretch reads KLSC. The Involved in virions binding and aphid transmission motif lies at 621-623; it reads PTK. Residues 647 to 769 enclose the Peptidase C6 domain; it reads MYIAKEGYCY…QSEMKHYRVG (123 aa). Active-site for helper component proteinase activity residues include cysteine 655 and histidine 728. A Helicase ATP-binding domain is found at 1239-1391; it reads EIASSNEGEF…TQFAVKVKTE (153 aa). An ATP-binding site is contributed by 1252–1259; sequence GAVGSGKS. The short motif at 1341–1344 is the DECH box element; sequence DECH. The Helicase C-terminal domain occupies 1410 to 1569; the sequence is DMIQHGNNIL…GLSVTTHGVS (160 aa). The short motif at 1894-1903 is the Nuclear localization signal element; it reads KRGKVKGNNS. Tyrosine 1918 carries the post-translational modification O-(5'-phospho-RNA)-tyrosine. A Peptidase C4 domain is found at 2045–2263; the sequence is SKSIYKGVRD…IAWGLLNLVD (219 aa). Active-site for nuclear inclusion protein A activity residues include histidine 2090, aspartate 2125, and cysteine 2195. The RdRp catalytic domain occupies 2529 to 2653; the sequence is WLYCHADGSQ…AVKDEDSGLL (125 aa). The disordered stretch occupies residues 2805–2854; sequence SDTQTKEADAGAAKRDKDEEKEKKKDVASSSANEKTMTATAKDKDVNAGS. A compositionally biased stretch (basic and acidic residues) spans 2808–2831; sequence QTKEADAGAAKRDKDEEKEKKKDV. Polar residues predominate over residues 2832-2843; sequence ASSSANEKTMTA.

It belongs to the potyviridae genome polyprotein family. As to quaternary structure, interacts with host eIF4E protein (via cap-binding region); this interaction mediates the translation of the VPg-viral RNA conjugates. Part of a complex that comprises VPg, RNA, host EIF4E and EIF4G; this interaction mediates the translation of the VPg-viral RNA conjugates. Post-translationally, VPg is uridylylated by the polymerase and is covalently attached to the 5'-end of the genomic RNA. This uridylylated form acts as a nucleotide-peptide primer for the polymerase. In terms of processing, potyviral RNA is expressed as two polyproteins which undergo post-translational proteolytic processing. Genome polyprotein is processed by NIa-pro, P1 and HC-pro proteinases resulting in the production of at least ten individual proteins. P3N-PIPO polyprotein is cleaved by P1 and HC-pro proteinases resulting in the production of three individual proteins. The P1 proteinase and the HC-pro cleave only their respective C-termini autocatalytically. 6K1 is essential for proper proteolytic separation of P3 from CI.

The protein resides in the host cytoplasmic vesicle. Its subcellular location is the host nucleus. It is found in the virion. It carries out the reaction RNA(n) + a ribonucleoside 5'-triphosphate = RNA(n+1) + diphosphate. The enzyme catalyses Hydrolyzes glutaminyl bonds, and activity is further restricted by preferences for the amino acids in P6 - P1' that vary with the species of potyvirus, e.g. Glu-Xaa-Xaa-Tyr-Xaa-Gln-|-(Ser or Gly) for the enzyme from tobacco etch virus. The natural substrate is the viral polyprotein, but other proteins and oligopeptides containing the appropriate consensus sequence are also cleaved.. It catalyses the reaction Hydrolyzes a Gly-|-Gly bond at its own C-terminus, commonly in the sequence -Tyr-Xaa-Val-Gly-|-Gly, in the processing of the potyviral polyprotein.. Functionally, required for aphid transmission and also has proteolytic activity. Only cleaves a Gly-Gly dipeptide at its own C-terminus. Interacts with virions and aphid stylets. Acts as a suppressor of RNA-mediated gene silencing, also known as post-transcriptional gene silencing (PTGS), a mechanism of plant viral defense that limits the accumulation of viral RNAs. May have RNA-binding activity. Has helicase activity. It may be involved in replication. In terms of biological role, indispensable for virus replication. Its function is as follows. Mediates the cap-independent, EIF4E-dependent translation of viral genomic RNAs. Binds to the cap-binding site of host EIF4E and thus interferes with the host EIF4E-dependent mRNA export and translation. VPg-RNA directly binds EIF4E and is a template for transcription. Also forms trimeric complexes with EIF4E-EIF4G, which are templates for translation. Functionally, has RNA-binding and proteolytic activities. An RNA-dependent RNA polymerase that plays an essential role in the virus replication. In terms of biological role, involved in aphid transmission, cell-to-cell and systemis movement, encapsidation of the viral RNA and in the regulation of viral RNA amplification. The protein is Genome polyprotein of Zucchini yellow mosaic virus (strain Reunion Island) (ZYMV).